The following is a 75-amino-acid chain: Translation initiation factor IF-1 1 (75 aa).

An S1-like domain is found at 1-74 (MARSDMIEVD…TRGRIVYRYR (74 aa)).

Belongs to the IF-1 family. Component of the 30S ribosomal translation pre-initiation complex which assembles on the 30S ribosome in the order IF-2 and IF-3, IF-1 and N-formylmethionyl-tRNA(fMet); mRNA recruitment can occur at any time during PIC assembly.

It is found in the cytoplasm. Its function is as follows. One of the essential components for the initiation of protein synthesis. Stabilizes the binding of IF-2 and IF-3 on the 30S subunit to which N-formylmethionyl-tRNA(fMet) subsequently binds. Helps modulate mRNA selection, yielding the 30S pre-initiation complex (PIC). Upon addition of the 50S ribosomal subunit IF-1, IF-2 and IF-3 are released leaving the mature 70S translation initiation complex. The protein is Translation initiation factor IF-1 1 of Symbiobacterium thermophilum (strain DSM 24528 / JCM 14929 / IAM 14863 / T).